A 738-amino-acid chain; its full sequence is Catalase-peroxidase (738 aa).

The disordered stretch occupies residues methionine 1–glycine 24. Positions tryptophan 108–tyrosine 231 form a cross-link, tryptophyl-tyrosyl-methioninium (Trp-Tyr) (with M-257). The active-site Proton acceptor is the histidine 109. Positions tyrosine 231 to methionine 257 form a cross-link, tryptophyl-tyrosyl-methioninium (Tyr-Met) (with W-108). Residue histidine 272 coordinates heme b.

This sequence belongs to the peroxidase family. Peroxidase/catalase subfamily. In terms of assembly, homodimer or homotetramer. Heme b is required as a cofactor. Post-translationally, formation of the three residue Trp-Tyr-Met cross-link is important for the catalase, but not the peroxidase activity of the enzyme.

It catalyses the reaction H2O2 + AH2 = A + 2 H2O. It carries out the reaction 2 H2O2 = O2 + 2 H2O. Functionally, bifunctional enzyme with both catalase and broad-spectrum peroxidase activity. In Mycobacteroides abscessus (strain ATCC 19977 / DSM 44196 / CCUG 20993 / CIP 104536 / JCM 13569 / NCTC 13031 / TMC 1543 / L948) (Mycobacterium abscessus), this protein is Catalase-peroxidase.